The chain runs to 275 residues: Large ribosomal subunit protein uL2 (275 aa).

The interval 223-275 is disordered; it reads VAMNPVDHPHGGGEGRTSGGRHPVSPWGQPTKGYKTRSNKRTDKYIVRRRNKK.

The protein belongs to the universal ribosomal protein uL2 family. Part of the 50S ribosomal subunit. Forms a bridge to the 30S subunit in the 70S ribosome.

Functionally, one of the primary rRNA binding proteins. Required for association of the 30S and 50S subunits to form the 70S ribosome, for tRNA binding and peptide bond formation. It has been suggested to have peptidyltransferase activity; this is somewhat controversial. Makes several contacts with the 16S rRNA in the 70S ribosome. In Shewanella piezotolerans (strain WP3 / JCM 13877), this protein is Large ribosomal subunit protein uL2.